The chain runs to 181 residues: Mating-type protein A1 (181 aa).

Positions 122–181 form a DNA-binding region, homeobox; sequence DKKKRRHIPESSKELLEKAFKVKRFPNSKERERIARECGISPLQVRVWFTNKRARSKSRA.

The protein belongs to the MATA1 family.

It localises to the nucleus. Its function is as follows. Mating type proteins are sequence specific DNA-binding proteins that act as master switches in yeast differentiation by controlling gene expression in a cell type-specific fashion. The polypeptide is Mating-type protein A1 (MATA1) (Pichia angusta (Yeast)).